Here is a 192-residue protein sequence, read N- to C-terminus: Fe/S biogenesis protein NfuA (192 aa).

Positions 149 and 152 each coordinate [4Fe-4S] cluster.

Belongs to the NfuA family. Homodimer. Requires [4Fe-4S] cluster as cofactor.

In terms of biological role, involved in iron-sulfur cluster biogenesis. Binds a 4Fe-4S cluster, can transfer this cluster to apoproteins, and thereby intervenes in the maturation of Fe/S proteins. Could also act as a scaffold/chaperone for damaged Fe/S proteins. This Colwellia psychrerythraea (strain 34H / ATCC BAA-681) (Vibrio psychroerythus) protein is Fe/S biogenesis protein NfuA.